A 152-amino-acid polypeptide reads, in one-letter code: Deoxyuridine 5'-triphosphate nucleotidohydrolase (152 aa).

Residues Arg-72–Gly-74, Asn-85, Thr-89–Asp-91, and Lys-99 each bind substrate.

Belongs to the dUTPase family. It depends on Mg(2+) as a cofactor.

It carries out the reaction dUTP + H2O = dUMP + diphosphate + H(+). Its pathway is pyrimidine metabolism; dUMP biosynthesis; dUMP from dCTP (dUTP route): step 2/2. This enzyme is involved in nucleotide metabolism: it produces dUMP, the immediate precursor of thymidine nucleotides and it decreases the intracellular concentration of dUTP so that uracil cannot be incorporated into DNA. The protein is Deoxyuridine 5'-triphosphate nucleotidohydrolase of Bradyrhizobium diazoefficiens (strain JCM 10833 / BCRC 13528 / IAM 13628 / NBRC 14792 / USDA 110).